A 470-amino-acid polypeptide reads, in one-letter code: ATP synthase subunit beta (470 aa).

158–165 (GGAGVGKT) serves as a coordination point for ATP.

This sequence belongs to the ATPase alpha/beta chains family. In terms of assembly, F-type ATPases have 2 components, CF(1) - the catalytic core - and CF(0) - the membrane proton channel. CF(1) has five subunits: alpha(3), beta(3), gamma(1), delta(1), epsilon(1). CF(0) has three main subunits: a(1), b(2) and c(9-12). The alpha and beta chains form an alternating ring which encloses part of the gamma chain. CF(1) is attached to CF(0) by a central stalk formed by the gamma and epsilon chains, while a peripheral stalk is formed by the delta and b chains.

The protein localises to the cell membrane. The catalysed reaction is ATP + H2O + 4 H(+)(in) = ADP + phosphate + 5 H(+)(out). In terms of biological role, produces ATP from ADP in the presence of a proton gradient across the membrane. The catalytic sites are hosted primarily by the beta subunits. The protein is ATP synthase subunit beta of Shouchella clausii (strain KSM-K16) (Alkalihalobacillus clausii).